Here is a 253-residue protein sequence, read N- to C-terminus: tRNA uridine(34) hydroxylase (253 aa).

In terms of domain architecture, Rhodanese spans Arg-127–Tyr-221. Residue Cys-181 is the Cysteine persulfide intermediate of the active site.

This sequence belongs to the TrhO family.

The enzyme catalyses uridine(34) in tRNA + AH2 + O2 = 5-hydroxyuridine(34) in tRNA + A + H2O. Catalyzes oxygen-dependent 5-hydroxyuridine (ho5U) modification at position 34 in tRNAs. The sequence is that of tRNA uridine(34) hydroxylase from Xanthomonas oryzae pv. oryzae (strain MAFF 311018).